The sequence spans 578 residues: Putative diflavin flavoprotein A 2 (578 aa).

Residues 48–240 (RHGTTYNSFL…LQVVLVATGH (193 aa)) form a zinc metallo-hydrolase region. Fe cation contacts are provided by histidine 97, glutamate 99, aspartate 101, histidine 164, aspartate 183, and histidine 240. Residues 269-406 (VALFYVDGYG…LCREAGTDLG (138 aa)) enclose the Flavodoxin-like domain. The segment at 429-578 (IGRLSTGLYI…THHRKLGNHY (150 aa)) is flavodoxin-reductase-like.

This sequence in the N-terminal section; belongs to the zinc metallo-hydrolase group 3 family. In the C-terminal section; belongs to the flavodoxin reductase family. Fe cation is required as a cofactor.

Its function is as follows. Mediates electron transfer from NADH to oxygen, reducing it to water. This modular protein has 3 redox cofactors, in other organisms the same activity requires 2 or 3 proteins. The protein is Putative diflavin flavoprotein A 2 (dfa2) of Synechocystis sp. (strain ATCC 27184 / PCC 6803 / Kazusa).